The primary structure comprises 178 residues: Large ribosomal subunit protein uL6 (178 aa).

It belongs to the universal ribosomal protein uL6 family. In terms of assembly, part of the 50S ribosomal subunit.

This protein binds to the 23S rRNA, and is important in its secondary structure. It is located near the subunit interface in the base of the L7/L12 stalk, and near the tRNA binding site of the peptidyltransferase center. This is Large ribosomal subunit protein uL6 from Arthrobacter sp. (strain FB24).